Consider the following 284-residue polypeptide: Dihydropteroate synthase (284 aa).

A Pterin-binding domain is found at 6–265; the sequence is VQVIGVLNVT…DVRASVDALK (260 aa). N13 lines the Mg(2+) pocket. (7,8-dihydropterin-6-yl)methyl diphosphate-binding positions include T53, D86, N105, D177, K213, and 253–255; that span reads RVH.

Belongs to the DHPS family. As to quaternary structure, homodimer. Mg(2+) serves as cofactor.

It catalyses the reaction (7,8-dihydropterin-6-yl)methyl diphosphate + 4-aminobenzoate = 7,8-dihydropteroate + diphosphate. The protein operates within cofactor biosynthesis; tetrahydrofolate biosynthesis; 7,8-dihydrofolate from 2-amino-4-hydroxy-6-hydroxymethyl-7,8-dihydropteridine diphosphate and 4-aminobenzoate: step 1/2. Is potently inhibited by the sulfone dapsone and the two sulfonamides sulfamethoxazole and sulfamethoxypyridazine, with Kis in the range of 12 to 32 nM. To a lesser extent, is also inhibited by p-aminosalicylate (PAS). In terms of biological role, catalyzes the condensation of para-aminobenzoate (pABA) with 6-hydroxymethyl-7,8-dihydropterin diphosphate (DHPt-PP) to form 7,8-dihydropteroate, the immediate precursor of folate derivatives. The polypeptide is Dihydropteroate synthase (folP1) (Mycobacterium leprae (strain TN)).